We begin with the raw amino-acid sequence, 412 residues long: Chorismate synthase (412 aa).

Residues Arg40 and Arg46 each contribute to the NADP(+) site. Residues 134-136, 255-256, Gly299, 314-318, and Arg340 contribute to the FMN site; these read RAS, QA, and KPIAT.

Belongs to the chorismate synthase family. In terms of assembly, homotetramer. FMNH2 serves as cofactor.

It catalyses the reaction 5-O-(1-carboxyvinyl)-3-phosphoshikimate = chorismate + phosphate. Its pathway is metabolic intermediate biosynthesis; chorismate biosynthesis; chorismate from D-erythrose 4-phosphate and phosphoenolpyruvate: step 7/7. Its function is as follows. Catalyzes the anti-1,4-elimination of the C-3 phosphate and the C-6 proR hydrogen from 5-enolpyruvylshikimate-3-phosphate (EPSP) to yield chorismate, which is the branch point compound that serves as the starting substrate for the three terminal pathways of aromatic amino acid biosynthesis. This reaction introduces a second double bond into the aromatic ring system. This Clavibacter michiganensis subsp. michiganensis (strain NCPPB 382) protein is Chorismate synthase.